A 404-amino-acid polypeptide reads, in one-letter code: Succinyl-diaminopimelate desuccinylase (404 aa).

His-80 serves as a coordination point for Zn(2+). The active site involves Asp-82. Asp-113 provides a ligand contact to Zn(2+). The active-site Proton acceptor is Glu-147. Residues Glu-148, Glu-176, and His-373 each coordinate Zn(2+).

The protein belongs to the peptidase M20A family. DapE subfamily. In terms of assembly, homodimer. It depends on Zn(2+) as a cofactor. Requires Co(2+) as cofactor.

The enzyme catalyses N-succinyl-(2S,6S)-2,6-diaminopimelate + H2O = (2S,6S)-2,6-diaminopimelate + succinate. The protein operates within amino-acid biosynthesis; L-lysine biosynthesis via DAP pathway; LL-2,6-diaminopimelate from (S)-tetrahydrodipicolinate (succinylase route): step 3/3. Catalyzes the hydrolysis of N-succinyl-L,L-diaminopimelic acid (SDAP), forming succinate and LL-2,6-diaminopimelate (DAP), an intermediate involved in the bacterial biosynthesis of lysine and meso-diaminopimelic acid, an essential component of bacterial cell walls. The protein is Succinyl-diaminopimelate desuccinylase of Allorhizobium ampelinum (strain ATCC BAA-846 / DSM 112012 / S4) (Agrobacterium vitis (strain S4)).